The following is a 168-amino-acid chain: uncharacterized protein (168 aa).

The next 4 helical transmembrane spans lie at 1-21 (MFWL…AVAR), 41-61 (PYII…VLLM), 68-88 (WWLG…WALC), and 123-143 (VILE…MCLF).

The protein localises to the cell membrane. This is an uncharacterized protein from Bacillus subtilis (strain 168).